We begin with the raw amino-acid sequence, 284 residues long: Nitrogenase iron protein 1 (284 aa).

17-24 (GKGGIGKS) is an ATP binding site. Cys-105 lines the [4Fe-4S] cluster pocket. Arg-108 is subject to ADP-ribosylarginine; by dinitrogenase reductase ADP-ribosyltransferase. Residue Cys-140 coordinates [4Fe-4S] cluster.

This sequence belongs to the NifH/BchL/ChlL family. In terms of assembly, homodimer. [4Fe-4S] cluster is required as a cofactor. In terms of processing, the reversible ADP-ribosylation of Arg-108 inactivates the nitrogenase reductase and regulates nitrogenase activity.

The catalysed reaction is N2 + 8 reduced [2Fe-2S]-[ferredoxin] + 16 ATP + 16 H2O = H2 + 8 oxidized [2Fe-2S]-[ferredoxin] + 2 NH4(+) + 16 ADP + 16 phosphate + 6 H(+). In terms of biological role, the key enzymatic reactions in nitrogen fixation are catalyzed by the nitrogenase complex, which has 2 components: the iron protein and the molybdenum-iron protein. The protein is Nitrogenase iron protein 1 (nifH1) of Methanothermococcus thermolithotrophicus (Methanococcus thermolithotrophicus).